The chain runs to 358 residues: Extracellular phospholipase C (358 aa).

It is found in the secreted. This chain is Extracellular phospholipase C (plcA), found in Dickeya chrysanthemi (Pectobacterium chrysanthemi).